We begin with the raw amino-acid sequence, 118 residues long: Large ribosomal subunit protein bL20 (118 aa).

Belongs to the bacterial ribosomal protein bL20 family. As to quaternary structure, part of the 50S ribosomal subunit. Contacts proteins L13 and L21.

Functionally, binds directly to 23S rRNA, probably serving to organize its structure. This Deinococcus radiodurans (strain ATCC 13939 / DSM 20539 / JCM 16871 / CCUG 27074 / LMG 4051 / NBRC 15346 / NCIMB 9279 / VKM B-1422 / R1) protein is Large ribosomal subunit protein bL20 (rplT).